We begin with the raw amino-acid sequence, 70 residues long: Putative membrane protein insertion efficiency factor (70 aa).

It belongs to the UPF0161 family.

The protein localises to the cell membrane. Functionally, could be involved in insertion of integral membrane proteins into the membrane. The protein is Putative membrane protein insertion efficiency factor of Finegoldia magna (strain ATCC 29328 / DSM 20472 / WAL 2508) (Peptostreptococcus magnus).